Here is a 138-residue protein sequence, read N- to C-terminus: Basic phospholipase A2 PLA-N (138 aa).

The N-terminal stretch at 1–16 (MRTLWIMAVLLVGVEG) is a signal peptide. Intrachain disulfides connect cysteine 42-cysteine 131, cysteine 44-cysteine 60, cysteine 59-cysteine 111, cysteine 65-cysteine 138, cysteine 66-cysteine 104, cysteine 73-cysteine 97, and cysteine 91-cysteine 102. 3 residues coordinate Ca(2+): tyrosine 43, glycine 45, and glycine 47. Residue histidine 63 is part of the active site. Position 64 (aspartate 64) interacts with Ca(2+). Residue aspartate 105 is part of the active site.

It belongs to the phospholipase A2 family. Group II subfamily. D49 sub-subfamily. It depends on Ca(2+) as a cofactor. As to expression, expressed by the venom gland.

The protein localises to the secreted. It carries out the reaction a 1,2-diacyl-sn-glycero-3-phosphocholine + H2O = a 1-acyl-sn-glycero-3-phosphocholine + a fatty acid + H(+). Functionally, snake venom phospholipase A2 (PLA2) that displays edema-inducing activities, as well as presynaptic neurotoxicity and myotoxicity. PLA2 catalyzes the calcium-dependent hydrolysis of the 2-acyl groups in 3-sn-phosphoglycerides. In Protobothrops flavoviridis (Habu), this protein is Basic phospholipase A2 PLA-N.